Here is a 694-residue protein sequence, read N- to C-terminus: Voltage-gated chloride channel TMC4 (694 aa).

The interval 1–21 (MEAWGQSPACSSSRKARTGPS) is disordered. Topologically, residues 1–150 (MEAWGQSPAC…GTESYFSLLR (150 aa)) are extracellular. Residues 151–171 (FLLFLNLVASVIEICMKLIPT) form a helical membrane-spanning segment. The Cytoplasmic portion of the chain corresponds to 172 to 231 (WLEGAPPGPPGPNISSPCGSYIPHTHGLVAFPTQLFNLLSGEGYLEWSPLFYGFYPPRSN). Residues 232–252 (LAITYLCSVFAISVIYLLCIL) traverse the membrane as a helical segment. Residues 253 to 330 (RRSVSGLKET…SQRAKVWSMR (78 aa)) lie on the Extracellular side of the membrane. Residues 331–351 (ALLNVLVLALLGAAFYGIYWA) traverse the membrane as a helical segment. The Cytoplasmic segment spans residues 352-376 (TEYTLTLQETPLVRQTPLFKLLVDY). A helical transmembrane segment spans residues 377–397 (LPSIFISLFNFVLPPVFKFIA). At 398–407 (SLEGYTQSRQ) the chain is on the extracellular side. A helical membrane pass occupies residues 408–428 (IVLILLRTVFLRLASLVFLLV). The Cytoplasmic segment spans residues 429-465 (SLWSQITCGGNMEAEGCKACGYNYKEIPCWETRLGQE). Residues 466 to 486 (MYKLVLFDLLMGLLVTLLVQF) form a helical membrane-spanning segment. At 487–513 (PRKILCGLCPGALGRLSGTLEFQVPDE) the chain is on the extracellular side. A helical membrane pass occupies residues 514-534 (VLGLIYAQTVVWVGSFFCPLL). Pro535 is a topological domain (cytoplasmic). Residues 536–556 (LINTAKFLILFCLKKITLFSI) form a helical membrane-spanning segment. At 557–574 (YSPASRTFRASTANFFFP) the chain is on the extracellular side. The helical transmembrane segment at 575–595 (LVLLVGLAISAVPVLYSIFLI) threads the bilayer. The Cytoplasmic portion of the chain corresponds to 596 to 635 (PPSKLCGPFRGKLSIWAQIPEAIESLPQTAQNFLYFLGTQ). Residues 636-656 (AFTVPLLILSSILMMYTVALA) form a helical membrane-spanning segment. The Extracellular portion of the chain corresponds to 657–694 (NCYGRLISELKRQIETEVQNKVFLAQRAVALSSRNGTS). Asn691 carries N-linked (GlcNAc...) asparagine glycosylation.

The protein belongs to the TMC family. Expressed in taste bud cells of the posterior tongue. Ubiquitously expressed.

The protein resides in the membrane. The enzyme catalyses chloride(in) = chloride(out). Functionally, voltage-gated chloride channel involved in high-concentration salt taste sensation. Depolarization induced by high NaCl concentration may trigger the activation of TMC4-mediated chloride influx into taste bud cells, helping the return to resting potential. Also allows permeation of organic anions including gluconate, but their current amplitudes at positive potentials are less than that of chloride. Involved in pH and temperature-dependent modulation of salty taste. This Mus musculus (Mouse) protein is Voltage-gated chloride channel TMC4.